The sequence spans 120 residues: Large ribosomal subunit protein uL22 (120 aa).

It belongs to the universal ribosomal protein uL22 family. Part of the 50S ribosomal subunit.

Its function is as follows. This protein binds specifically to 23S rRNA; its binding is stimulated by other ribosomal proteins, e.g. L4, L17, and L20. It is important during the early stages of 50S assembly. It makes multiple contacts with different domains of the 23S rRNA in the assembled 50S subunit and ribosome. The globular domain of the protein is located near the polypeptide exit tunnel on the outside of the subunit, while an extended beta-hairpin is found that lines the wall of the exit tunnel in the center of the 70S ribosome. In Oenococcus oeni (strain ATCC BAA-331 / PSU-1), this protein is Large ribosomal subunit protein uL22.